The sequence spans 363 residues: MGRFKRHHEGDSDSSSSASDSLSRGRRSLGHKRSSHIKNRQYYILEKKIRKLMFAMKALLEETKHSTKDDVNLVIPGSTWSHIEGVYEMLKSRHDRQNEPVIEEPSSHPKNQKNQENNEPTSEEFEEGEYPPPLPPLRSEKLKEQVFMHISRAYEIYPNQSNPNELLDIHNERLEFLGDSFFNLFTTRIIFSKFPQMDEGSLSKLRAKFVGNESADKFARLYGFDKTLVLSYSAEKDQLRKSQKVIADTFEAYLGALILDGQEETAFQWVSRLLQPKIANITVQRPIDKLAKSKLFHKYSTLGHIEYRWVDGAGGSAEGYVIACIFNGKEVARAWGANQKDAGSRAAMQALEVLAKDYSKFAR.

Disordered stretches follow at residues 1–35 (MGRFKRHHEGDSDSSSSASDSLSRGRRSLGHKRSS) and 92–138 (SRHD…PPLR). The segment covering 13-22 (DSSSSASDSL) has biased composition (low complexity). Over residues 24–35 (RGRRSLGHKRSS) the composition is skewed to basic residues. S122 bears the Phosphoserine mark. The region spanning 139–262 (SEKLKEQVFM…YLGALILDGQ (124 aa)) is the RNase III domain. A DRBM domain is found at 285-356 (RPIDKLAKSK…AMQALEVLAK (72 aa)).

Mg(2+) is required as a cofactor.

It carries out the reaction Endonucleolytic cleavage to 5'-phosphomonoester.. Digests double-stranded RNA. Converts long double-stranded RNAs into short oligonucleotides, leaving 5'-phosphates on their cleavage products. Probably inhibits mating and meiosis by degrading a specific mRNA required for sexual development. The sequence is that of Double-strand-specific pac1 ribonuclease (pac1) from Schizosaccharomyces pombe (strain 972 / ATCC 24843) (Fission yeast).